The primary structure comprises 234 residues: Glycerol-3-phosphate acyltransferase (234 aa).

6 consecutive transmembrane segments (helical) span residues 4-24 (LLAILVVSYIVGSIPTSLIAG), 56-76 (TVTLIDIIKGVVAAVSVVAFF), 90-110 (VALRLLAGMSAVIGHVFTVFA), 122-142 (AGMLIGIAPVSMLMVIGVFLL), 152-172 (VASILAAIAFPLIIAIRKYLF), and 191-211 (FHDSLDYHLIIFGLIVAIAII).

This sequence belongs to the PlsY family. In terms of assembly, probably interacts with PlsX.

It is found in the cell inner membrane. The enzyme catalyses an acyl phosphate + sn-glycerol 3-phosphate = a 1-acyl-sn-glycero-3-phosphate + phosphate. It functions in the pathway lipid metabolism; phospholipid metabolism. Functionally, catalyzes the transfer of an acyl group from acyl-phosphate (acyl-PO(4)) to glycerol-3-phosphate (G3P) to form lysophosphatidic acid (LPA). This enzyme utilizes acyl-phosphate as fatty acyl donor, but not acyl-CoA or acyl-ACP. The protein is Glycerol-3-phosphate acyltransferase of Chlorobium chlorochromatii (strain CaD3).